The primary structure comprises 246 residues: UDP-N-acetyl-D-mannosaminuronic acid transferase (246 aa).

It belongs to the glycosyltransferase 26 family.

The enzyme catalyses UDP-N-acetyl-alpha-D-mannosaminouronate + N-acetyl-alpha-D-glucosaminyl-di-trans,octa-cis-undecaprenyl diphosphate = beta-D-ManNAcA-(1-&gt;4)-alpha-D-GlcNAc-di-trans,octa-cis-undecaprenyl diphosphate + UDP + H(+). It functions in the pathway bacterial outer membrane biogenesis; enterobacterial common antigen biosynthesis. Functionally, catalyzes the synthesis of Und-PP-GlcNAc-ManNAcA (Lipid II), the second lipid-linked intermediate involved in enterobacterial common antigen (ECA) synthesis. The polypeptide is UDP-N-acetyl-D-mannosaminuronic acid transferase (Escherichia coli O7:K1 (strain IAI39 / ExPEC)).